A 531-amino-acid chain; its full sequence is Lysine--tRNA ligase, mitochondrial (531 aa).

A mitochondrion-targeting transit peptide spans 1–18 (MISRGLLSKGILSIIKRK).

The protein belongs to the class-II aminoacyl-tRNA synthetase family.

The protein localises to the mitochondrion. The enzyme catalyses tRNA(Lys) + L-lysine + ATP = L-lysyl-tRNA(Lys) + AMP + diphosphate. This chain is Lysine--tRNA ligase, mitochondrial (msk1), found in Schizosaccharomyces pombe (strain 972 / ATCC 24843) (Fission yeast).